The primary structure comprises 682 residues: 1,4-alpha-glucan-branching enzyme (682 aa).

The (1,4-alpha-D-glucosyl)n site is built by Trp-88 and Lys-124. The active-site Nucleophile is the Asp-342. Catalysis depends on Glu-397, which acts as the Proton donor.

The protein belongs to the glycosyl hydrolase 13 family. GlgB subfamily.

The protein resides in the cytoplasm. The catalysed reaction is Transfers a segment of a (1-&gt;4)-alpha-D-glucan chain to a primary hydroxy group in a similar glucan chain.. The protein operates within glycan biosynthesis; glycogen biosynthesis. Its function is as follows. Glycogen-branching enzyme participates in the glycogen biosynthetic process along with glycogenin and glycogen synthase. Generates alpha-1,6-glucosidic branches from alpha-1,4-linked glucose chains, to increase solubility of the glycogen polymer. The chain is 1,4-alpha-glucan-branching enzyme from Cryptococcus neoformans var. grubii serotype A (strain H99 / ATCC 208821 / CBS 10515 / FGSC 9487) (Filobasidiella neoformans var. grubii).